Consider the following 158-residue polypeptide: Large ribosomal subunit protein bL21 (158 aa).

Residues 106-158 form a disordered region; that stretch reads SKPKKAAAKPIKEEATAAKGTKDTAVEKKAEKTAEKKTASQKKAAVASKSKKD. Over residues 115 to 143 the composition is skewed to basic and acidic residues; sequence PIKEEATAAKGTKDTAVEKKAEKTAEKKT. Positions 146–158 are enriched in low complexity; it reads QKKAAVASKSKKD.

This sequence belongs to the bacterial ribosomal protein bL21 family. In terms of assembly, part of the 50S ribosomal subunit. Contacts protein L20.

In terms of biological role, this protein binds to 23S rRNA in the presence of protein L20. This is Large ribosomal subunit protein bL21 from Bartonella tribocorum (strain CIP 105476 / IBS 506).